We begin with the raw amino-acid sequence, 64 residues long: Bowman-Birk type trypsin inhibitor TI1 (64 aa).

Disulfide bonds link Cys9–Cys61, Cys10–Cys25, Cys15–Cys23, Cys32–Cys39, and Cys36–Cys49.

It belongs to the Bowman-Birk serine protease inhibitor family.

The sequence is that of Bowman-Birk type trypsin inhibitor TI1 from Coix lacryma-jobi (Job's tears).